The following is a 395-amino-acid chain: Zinc-regulated GTPase metalloprotein activator 1E (395 aa).

A disordered region spans residues 1–22; sequence MLPAVGSVDEEEDPAEEDCPEL. Over residues 8-20 the composition is skewed to acidic residues; it reads VDEEEDPAEEDCP. Residues 17-24 carry the psi-PxLVp motif motif; the sequence is EDCPELVP. Residue 49 to 56 participates in GTP binding; the sequence is GYLGAGKT. Positions 107, 109, and 110 each coordinate Zn(2+). Positions 107 to 110 match the CXCC motif motif; that stretch reads CLCC. Residues 110–114 and 203–206 each bind GTP; these read CSVKD and NKTD. The 104-residue stretch at 274–377 folds into the CobW C-terminal domain; the sequence is IVTITFEVPG…ILKQLFIATV (104 aa).

Belongs to the SIMIBI class G3E GTPase family. ZNG1 subfamily.

It localises to the nucleus. The catalysed reaction is GTP + H2O = GDP + phosphate + H(+). In terms of biological role, zinc chaperone that directly transfers zinc cofactor to target metalloproteins, thereby activating them. Catalyzes zinc insertion into the active site of methionine aminopeptidase METAP1, which function to cleave the initiator methionine from polypeptides during or after protein translation. Mechanistically, the N-terminal psi-PxLVp motif binds to the C6H2-type zinc finger of inactive form of METAP1. After formation of the docked complex, zinc is transferred from the CXCC motif in the GTPase domain of ZNG1E to the zinc binding site in the peptidase domain of METAP1 in a process requiring GTP hydrolysis. GTP/GDP exchange is required for release of active METAP1. This chain is Zinc-regulated GTPase metalloprotein activator 1E, found in Homo sapiens (Human).